A 177-amino-acid chain; its full sequence is ATP-dependent protease subunit HslV (177 aa).

Residue T6 is part of the active site. Na(+) contacts are provided by G161, C164, and T167.

It belongs to the peptidase T1B family. HslV subfamily. As to quaternary structure, a double ring-shaped homohexamer of HslV is capped on each side by a ring-shaped HslU homohexamer. The assembly of the HslU/HslV complex is dependent on binding of ATP.

It localises to the cytoplasm. It carries out the reaction ATP-dependent cleavage of peptide bonds with broad specificity.. Its activity is regulated as follows. Allosterically activated by HslU binding. Functionally, protease subunit of a proteasome-like degradation complex believed to be a general protein degrading machinery. The protein is ATP-dependent protease subunit HslV of Petrotoga mobilis (strain DSM 10674 / SJ95).